Here is a 452-residue protein sequence, read N- to C-terminus: Pup--protein ligase (452 aa).

Position 9 (Glu9) interacts with Mg(2+). Arg53 lines the ATP pocket. Residue Tyr55 coordinates Mg(2+). Asp57 (proton acceptor) is an active-site residue. Residue Glu63 participates in Mg(2+) binding. Positions 66 and 419 each coordinate ATP.

The protein belongs to the Pup ligase/Pup deamidase family. Pup-conjugating enzyme subfamily.

It catalyses the reaction ATP + [prokaryotic ubiquitin-like protein]-L-glutamate + [protein]-L-lysine = ADP + phosphate + N(6)-([prokaryotic ubiquitin-like protein]-gamma-L-glutamyl)-[protein]-L-lysine.. It participates in protein degradation; proteasomal Pup-dependent pathway. The protein operates within protein modification; protein pupylation. Its function is as follows. Catalyzes the covalent attachment of the prokaryotic ubiquitin-like protein modifier Pup to the proteasomal substrate proteins, thereby targeting them for proteasomal degradation. This tagging system is termed pupylation. The ligation reaction involves the side-chain carboxylate of the C-terminal glutamate of Pup and the side-chain amino group of a substrate lysine. This Salinispora tropica (strain ATCC BAA-916 / DSM 44818 / JCM 13857 / NBRC 105044 / CNB-440) protein is Pup--protein ligase.